The following is a 284-amino-acid chain: Protein-S-isoprenylcysteine O-methyltransferase (284 aa).

Residues 1–16 are Cytoplasmic-facing; sequence MAGCAARAPPGSEARL. Residues 17 to 33 traverse the membrane as a helical segment; sequence SLATFLLGASVLALPLL. At 34 to 41 the chain is on the lumenal side; that stretch reads TRAGLQGR. A helical transmembrane segment spans residues 42–59; sequence TGLALYVAGLNALLLLLY. Residues 60 to 69 are Cytoplasmic-facing; sequence RPPRYQIAIR. Residues 70-87 traverse the membrane as a helical segment; sequence ACFLGFVFGCGTLLSFSQ. The Lumenal portion of the chain corresponds to 88 to 92; the sequence is SSWSH. A helical transmembrane segment spans residues 93 to 112; the sequence is FGWYMCSLSLFHYSEYLVTA. Topologically, residues 113–131 are cytoplasmic; it reads VNNPKSLSLDSFLLNHSLE. A helical membrane pass occupies residues 132 to 149; it reads YTVAALSSWLEFTLENIF. At 150–154 the chain is on the lumenal side; that stretch reads WPELK. A helical membrane pass occupies residues 155 to 174; that stretch reads QITWLSVTGLLMVVFGECLR. Over 175–212 the chain is Cytoplasmic; sequence KAAMFTAGSNFNHVVQNEKSDTHTLVTSGVYAWFRHPS. Residues Q190, 197–200, Y205, and 210–213 contribute to the S-adenosyl-L-methionine site; these read HTLV and HPSY. The chain crosses the membrane as a helical span at residues 213–228; sequence YVGWFYWSIGTQVMLC. Position 229 (N229) is a topological domain, lumenal. A helical membrane pass occupies residues 230-244; that stretch reads PICGVSYALTVWRFF. The Cytoplasmic segment spans residues 245 to 284; sequence RDRTEEEEISLIHFFGEEYLEYKKRVPTGLPFIKGVKVDL. R247 lines the substrate pocket. An S-adenosyl-L-methionine-binding site is contributed by E251.

The protein belongs to the class VI-like SAM-binding methyltransferase superfamily. Isoprenylcysteine carboxyl methyltransferase family. As to expression, ubiquitously expressed. Expressed at higher levels in the cerebellum and putamen than in other brain regions. Abundant expression seen in the Purkinje cells and pontine neurons.

It localises to the endoplasmic reticulum membrane. It carries out the reaction [protein]-C-terminal S-[(2E,6E)-farnesyl]-L-cysteine + S-adenosyl-L-methionine = [protein]-C-terminal S-[(2E,6E)-farnesyl]-L-cysteine methyl ester + S-adenosyl-L-homocysteine. With respect to regulation, competitively inhibited by N-acetyl-S-trans,trans-farnesyl-l-cysteine (AFC). Functionally, catalyzes the post-translational methylation of isoprenylated C-terminal cysteine residues. This Homo sapiens (Human) protein is Protein-S-isoprenylcysteine O-methyltransferase (ICMT).